A 279-amino-acid polypeptide reads, in one-letter code: Zinc finger CCCH domain-containing protein 42 (279 aa).

Residues 11–77 (SDHRSSSTPM…KAAVEPQEYP (67 aa)) form a disordered region. Over residues 16–39 (SSTPMATTTSSSASDPAAISPTPS) the composition is skewed to low complexity. 3 C3H1-type zinc fingers span residues 79–107 (RPGV…HPAK), 120–148 (RPGE…HPPD), and 186–214 (RPGT…HPNS).

This Oryza sativa subsp. japonica (Rice) protein is Zinc finger CCCH domain-containing protein 42.